The primary structure comprises 754 residues: Disintegrin and metalloproteinase domain-containing protein 32 (754 aa).

Residues 1-22 form the signal peptide; it reads MLGAMLHTLLLLLLAELGALLA. Ser-23 carries the phosphoserine modification. Residues 23 to 176 constitute a propeptide that is removed on maturation; sequence SGPESQSSFL…TNYGILINKK (154 aa). N-linked (GlcNAc...) asparagine glycosylation is present at Asn-126. Topologically, residues 177–689 are extracellular; sequence PKSPFKNLFP…ERASKNQEKK (513 aa). In terms of domain architecture, Peptidase M12B spans 187-384; it reads LYLEMSIVVD…EGAKCLQNKP (198 aa). Intrachain disulfides connect Cys-296–Cys-379, Cys-338–Cys-363, Cys-340–Cys-345, and Cys-454–Cys-475. N-linked (GlcNAc...) asparagine glycosylation is found at Asn-362, Asn-469, Asn-570, and Asn-571. The 93-residue stretch at 391 to 483 folds into the Disintegrin domain; sequence AAVCGNGKVE…NCPPDVTINN (93 aa). An EGF-like domain is found at 628-660; it reads QSKTCSSKCHGNGVCNSHGVCHCNAGYSPPNCQ. 3 disulfide bridges follow: Cys-632/Cys-642, Cys-636/Cys-648, and Cys-650/Cys-659. Residues 690–710 traverse the membrane as a helical segment; the sequence is WLLSLYIVLIILASVFLIGTG. At 711–754 the chain is on the cytoplasmic side; it reads WKGLKQCGSKEEESMSSESKSEDSTYTYVSRSTSETSSMTSTSS. Basic and acidic residues predominate over residues 720 to 733; that stretch reads KEEESMSSESKSED. The interval 720 to 754 is disordered; the sequence is KEEESMSSESKSEDSTYTYVSRSTSETSSMTSTSS. A compositionally biased stretch (low complexity) spans 734–754; that stretch reads STYTYVSRSTSETSSMTSTSS.

Expressed in sperm (at protein level). Highly expressed in the testis and weakly expressed in the epididymis, brain and heart.

It localises to the membrane. Its function is as follows. May play a role in sperm development and fertilization This is a non-catalytic metalloprotease-like protein. The protein is Disintegrin and metalloproteinase domain-containing protein 32 of Mus musculus (Mouse).